Here is a 398-residue protein sequence, read N- to C-terminus: NADH-quinone oxidoreductase subunit D (398 aa).

It belongs to the complex I 49 kDa subunit family. As to quaternary structure, NDH-1 is composed of 14 different subunits. Subunits NuoB, C, D, E, F, and G constitute the peripheral sector of the complex.

It localises to the cell inner membrane. It carries out the reaction a quinone + NADH + 5 H(+)(in) = a quinol + NAD(+) + 4 H(+)(out). In terms of biological role, NDH-1 shuttles electrons from NADH, via FMN and iron-sulfur (Fe-S) centers, to quinones in the respiratory chain. The immediate electron acceptor for the enzyme in this species is believed to be ubiquinone. Couples the redox reaction to proton translocation (for every two electrons transferred, four hydrogen ions are translocated across the cytoplasmic membrane), and thus conserves the redox energy in a proton gradient. The chain is NADH-quinone oxidoreductase subunit D from Anaplasma marginale (strain St. Maries).